The chain runs to 512 residues: Multidrug resistance protein 3 (512 aa).

The next 14 membrane-spanning stretches (helical) occupy residues 13–33 (FVVLGLLLGILMSAMDNTIVA), 48–68 (KFAWVTASYMVAVMAGMPIYG), 79–99 (FFLFGLIFFLIGSALCGIAQT), 109–129 (IQGIGGGALLPIAFTIIFDLF), 139–159 (GMFGAVFGLSSVLGPLLGAII), 163–183 (ISWHWVFYINVPIGALSLFFI), 200–220 (WGGAITLVVSIVCLMFALELG), 228–248 (SIQIIGLFIVFAVFFIAFFIV), 272–292 (ILAFLYGGTFIILAVFIPIFV), 304–324 (GFILTPMMIGSVIGSMIGGIF), 333–353 (LMLISVIAFFIGMLLLSNMTP), 358–378 (VWLTVFMMISGFGVGFNFSLL), 399–421 (SFLRSFGMTLGVTIFGTVQTNVF), and 475–495 (ITYVFLLALIPIVLAAVTILF).

It belongs to the major facilitator superfamily. EmrB family.

The protein localises to the cell membrane. Functionally, confers resistance to puromycin, tosufloxacin and norfloxacin. This is Multidrug resistance protein 3 (bmr3) from Bacillus subtilis (strain 168).